A 147-amino-acid chain; its full sequence is Small nuclear ribonucleoprotein-associated protein B (147 aa).

The region spanning 1 to 84 (MGTTKMVSLL…IVSLSVQGPP (84 aa)) is the Sm domain. 2 disordered regions span residues 87–106 (DPSM…PAGR) and 128–147 (APPP…FRPV).

It belongs to the snRNP SmB/SmN family. As to quaternary structure, belongs to the 40S cdc5-associated complex (or cwf complex), a spliceosome sub-complex reminiscent of a late-stage spliceosome composed of the U2, U5 and U6 snRNAs and at least brr2, cdc5, cwf2/prp3, cwf3/syf1, cwf4/syf3, cwf5/ecm2, spp42/cwf6, cwf7/spf27, cwf8, cwf9, cwf10, cwf11, cwf12, prp45/cwf13, cwf14, cwf15, cwf16, cwf17, cwf18, cwf19, cwf20, cwf21, cwf22, cwf23, cwf24, cwf25, cwf26, cyp7/cwf27, cwf28, cwf29/ist3, lea1, msl1, prp5/cwf1, prp10, prp12/sap130, prp17, prp22, sap61, sap62, sap114, sap145, slu7, smb1, smd1, smd3, smf1, smg1 and syf2.

The protein localises to the nucleus. The protein resides in the cytoplasm. Functionally, plays a role in pre-mRNA splicing as a core component of the spliceosomal U1, U2, U4 and U5 small nuclear ribonucleoproteins (snRNPs), the building blocks of the spliceosome. This Schizosaccharomyces pombe (strain 972 / ATCC 24843) (Fission yeast) protein is Small nuclear ribonucleoprotein-associated protein B (smb1).